The primary structure comprises 218 residues: Ras-related protein Rab-11B (218 aa).

Position 2 is an N-acetylglycine (Gly-2). GTP contacts are provided by Ser-20, Gly-21, Gly-23, Lys-24, Ser-25, Asn-26, Asn-37, Leu-38, Ser-40, Ser-42, and Thr-43. Ser-25 is a binding site for Mg(2+). Positions 36-47 match the Switch 1 motif; it reads FNLESKSTIGVE. Mg(2+) is bound by residues Thr-43 and Asp-66. The short motif at 67–86 is the Switch 2 element; sequence TAGQERYRAITSAYYRGAVG. Residues Gly-69, Asn-124, Lys-125, Asp-127, Ala-155, and Leu-156 each coordinate GTP. The disordered stretch occupies residues 183–218; that stretch reads DRSAHDESPGNNVVDISVPPTTDGQKSNKLQCCQNM. The segment covering 201 to 218 has biased composition (polar residues); sequence PPTTDGQKSNKLQCCQNM. 2 S-geranylgeranyl cysteine lipidation sites follow: Cys-214 and Cys-215. Cys-215 bears the Cysteine methyl ester mark. Residues 216–218 constitute a propeptide, removed in mature form; it reads QNM.

Belongs to the small GTPase superfamily. Rab family. Mg(2+) serves as cofactor.

It localises to the recycling endosome membrane. Its subcellular location is the cytoplasmic vesicle. The protein resides in the secretory vesicle. The protein localises to the synaptic vesicle membrane. It is found in the phagosome membrane. The enzyme catalyses GTP + H2O = GDP + phosphate + H(+). Its activity is regulated as follows. Regulated by guanine nucleotide exchange factors (GEFs) which promote the exchange of bound GDP for free GTP. Regulated by GTPase activating proteins (GAPs) which increase the GTP hydrolysis activity. Inhibited by GDP dissociation inhibitors (GDIs) which prevent Rab-GDP dissociation. The small GTPases Rab are key regulators of intracellular membrane trafficking, from the formation of transport vesicles to their fusion with membranes. Rabs cycle between an inactive GDP-bound form and an active GTP-bound form that is able to recruit to membranes different set of downstream effectors directly responsible for vesicle formation, movement, tethering and fusion. That Rab plays a role in endocytic recycling, regulating apical recycling of several transmembrane proteins including cystic fibrosis transmembrane conductance regulator/CFTR, epithelial sodium channel/ENaC, potassium voltage-gated channel, and voltage-dependent L-type calcium channel. May also regulate constitutive and regulated secretion, like insulin granule exocytosis. Required for melanosome transport and release from melanocytes. Also regulates V-ATPase intracellular transport in response to extracellular acidosis. In Diplobatis ommata (Ocellated electric ray), this protein is Ras-related protein Rab-11B.